A 193-amino-acid polypeptide reads, in one-letter code: Probable nicotinate-nucleotide adenylyltransferase (193 aa).

Belongs to the NadD family.

It catalyses the reaction nicotinate beta-D-ribonucleotide + ATP + H(+) = deamido-NAD(+) + diphosphate. The protein operates within cofactor biosynthesis; NAD(+) biosynthesis; deamido-NAD(+) from nicotinate D-ribonucleotide: step 1/1. Catalyzes the reversible adenylation of nicotinate mononucleotide (NaMN) to nicotinic acid adenine dinucleotide (NaAD). This chain is Probable nicotinate-nucleotide adenylyltransferase, found in Coprothermobacter proteolyticus (strain ATCC 35245 / DSM 5265 / OCM 4 / BT).